A 264-amino-acid polypeptide reads, in one-letter code: Exodeoxyribonuclease YycJ (264 aa).

Residues H58, H60, D62, H63, and D145 each coordinate a divalent metal cation.

Belongs to the metallo-beta-lactamase superfamily. Requires Fe(2+) as cofactor. It depends on Zn(2+) as a cofactor. Mn(2+) serves as cofactor.

Functionally, 5'-&gt;3' double-stranded DNA exonuclease. May play a role in mutation mismatch repair (MMR). Required for accurate coordination of cell division with DNA replication. May play a role in cell wall metabolism. This chain is Exodeoxyribonuclease YycJ, found in Bacillus anthracis.